The primary structure comprises 269 residues: Imidazole glycerol phosphate synthase subunit HisF (269 aa).

Residues Asp23 and Asp142 contribute to the active site.

This sequence belongs to the HisA/HisF family. In terms of assembly, heterodimer of HisH and HisF.

Its subcellular location is the cytoplasm. The catalysed reaction is 5-[(5-phospho-1-deoxy-D-ribulos-1-ylimino)methylamino]-1-(5-phospho-beta-D-ribosyl)imidazole-4-carboxamide + L-glutamine = D-erythro-1-(imidazol-4-yl)glycerol 3-phosphate + 5-amino-1-(5-phospho-beta-D-ribosyl)imidazole-4-carboxamide + L-glutamate + H(+). It functions in the pathway amino-acid biosynthesis; L-histidine biosynthesis; L-histidine from 5-phospho-alpha-D-ribose 1-diphosphate: step 5/9. Functionally, IGPS catalyzes the conversion of PRFAR and glutamine to IGP, AICAR and glutamate. The HisF subunit catalyzes the cyclization activity that produces IGP and AICAR from PRFAR using the ammonia provided by the HisH subunit. This is Imidazole glycerol phosphate synthase subunit HisF from Bordetella pertussis (strain Tohama I / ATCC BAA-589 / NCTC 13251).